Reading from the N-terminus, the 575-residue chain is Golgi-associated kinase 1A (575 aa).

A signal peptide spans 1–29; it reads MASWLRRKLRGKRRPVIAFCLLMILSAMA. Positions 30 to 119 are cleaved as a propeptide — removed in mature form; that stretch reads VTRFPPQRPS…GDLRHPGRVR (90 aa). Residues 53–58 are O-glycosylated at one site; it reads TGAPAT. A compositionally biased stretch (basic and acidic residues) spans 143–153; it reads VGDPGTKDLGH. The interval 143-162 is disordered; sequence VGDPGTKDLGHPQHGSPIQE. Positions 437–575 are cleaved as a propeptide — removed in mature form; sequence RYCCGFEPEP…NLTLFRDEDP (139 aa). N-linked (GlcNAc...) asparagine glycosylation occurs at Asn566.

It belongs to the GASK family. O-glycosylated with core 1 or possibly core 8 glycans. In terms of processing, proteolytically cleaved. Cleaved at Arg-120 and Arg-437 leading to a processed mature product of 35 kDa. The cleavage takes place in the Golgi apparatus. Expressed in skin, lung and colon (at protein level).

It localises to the secreted. The protein localises to the endoplasmic reticulum. It is found in the golgi apparatus. Its subcellular location is the membrane. The protein resides in the caveola. This Homo sapiens (Human) protein is Golgi-associated kinase 1A.